The primary structure comprises 968 residues: RNA polymerase-associated protein RapA (968 aa).

The Helicase ATP-binding domain occupies 163-332 (EVGRRYAPRV…FARLRLLDPD (170 aa)). 176-183 (DEVGLGKT) is a binding site for ATP. Residues 278-281 (DEAH) carry the DEAH box motif. In terms of domain architecture, Helicase C-terminal spans 491–655 (RVDWLIEFLK…EFAEDLLNVL (165 aa)).

This sequence belongs to the SNF2/RAD54 helicase family. RapA subfamily. Interacts with the RNAP. Has a higher affinity for the core RNAP than for the holoenzyme. Its ATPase activity is stimulated by binding to RNAP.

Functionally, transcription regulator that activates transcription by stimulating RNA polymerase (RNAP) recycling in case of stress conditions such as supercoiled DNA or high salt concentrations. Probably acts by releasing the RNAP, when it is trapped or immobilized on tightly supercoiled DNA. Does not activate transcription on linear DNA. Probably not involved in DNA repair. This Shewanella baltica (strain OS223) protein is RNA polymerase-associated protein RapA.